We begin with the raw amino-acid sequence, 53 residues long: UPF0391 membrane protein BamMC406_6344 (53 aa).

The next 2 helical transmembrane spans lie at 5–25 (AIIFFVIAIIAAVFGFGGIAA) and 30–50 (IAKILFYIFVVIFLVTLLLGV).

This sequence belongs to the UPF0391 family.

The protein localises to the cell membrane. The sequence is that of UPF0391 membrane protein BamMC406_6344 from Burkholderia ambifaria (strain MC40-6).